A 206-amino-acid polypeptide reads, in one-letter code: Large ribosomal subunit protein uL4 (206 aa).

Belongs to the universal ribosomal protein uL4 family. Part of the 50S ribosomal subunit.

Its function is as follows. One of the primary rRNA binding proteins, this protein initially binds near the 5'-end of the 23S rRNA. It is important during the early stages of 50S assembly. It makes multiple contacts with different domains of the 23S rRNA in the assembled 50S subunit and ribosome. In terms of biological role, forms part of the polypeptide exit tunnel. The sequence is that of Large ribosomal subunit protein uL4 from Cereibacter sphaeroides (strain ATCC 17025 / ATH 2.4.3) (Rhodobacter sphaeroides).